The primary structure comprises 182 residues: Large ribosomal subunit protein uL6 (182 aa).

It belongs to the universal ribosomal protein uL6 family. As to quaternary structure, part of the 50S ribosomal subunit.

Its function is as follows. This protein binds to the 23S rRNA, and is important in its secondary structure. It is located near the subunit interface in the base of the L7/L12 stalk, and near the tRNA binding site of the peptidyltransferase center. The sequence is that of Large ribosomal subunit protein uL6 from Methanococcus maripaludis (strain C7 / ATCC BAA-1331).